The sequence spans 446 residues: Serine--tRNA ligase, mitochondrial (446 aa).

251–253 contributes to the L-serine binding site; it reads TAE. ATP contacts are provided by residues 284 to 286 and V300; that span reads RAE. E307 is a binding site for L-serine. ATP is bound at residue 371–374; sequence EISS. L-serine is bound at residue T407.

Belongs to the class-II aminoacyl-tRNA synthetase family. Type-1 seryl-tRNA synthetase subfamily. In terms of assembly, homodimer. The tRNA molecule binds across the dimer.

The protein resides in the mitochondrion matrix. The catalysed reaction is tRNA(Ser) + L-serine + ATP = L-seryl-tRNA(Ser) + AMP + diphosphate + H(+). Catalyzes the attachment of serine to tRNA(Ser). The sequence is that of Serine--tRNA ligase, mitochondrial (DIA4) from Saccharomyces cerevisiae (strain ATCC 204508 / S288c) (Baker's yeast).